Here is a 240-residue protein sequence, read N- to C-terminus: Manganese transport system ATP-binding protein MntB (240 aa).

The 233-residue stretch at 1 to 233 folds into the ABC transporter domain; that stretch reads MNIQGLTIAY…KIQFAYGDAP (233 aa). 33–40 lines the ATP pocket; that stretch reads GPNGAGKS.

Belongs to the ABC transporter superfamily.

The protein resides in the cell membrane. In terms of biological role, this protein is probably a component of a manganese permease, a binding protein-dependent, ATP-driven transport system. Probably responsible for energy coupling to the transport system. This is Manganese transport system ATP-binding protein MntB (mntB) from Listeria innocua serovar 6a (strain ATCC BAA-680 / CLIP 11262).